The chain runs to 395 residues: Phosphoglycerate kinase (395 aa).

Substrate contacts are provided by residues 21 to 23, Arg-36, 59 to 62, Arg-114, and Arg-147; these read DLN and HLGR. ATP-binding positions include Lys-198, Glu-320, and 346–349; that span reads GGDT.

This sequence belongs to the phosphoglycerate kinase family. In terms of assembly, monomer.

It localises to the cytoplasm. The catalysed reaction is (2R)-3-phosphoglycerate + ATP = (2R)-3-phospho-glyceroyl phosphate + ADP. Its pathway is carbohydrate degradation; glycolysis; pyruvate from D-glyceraldehyde 3-phosphate: step 2/5. The polypeptide is Phosphoglycerate kinase (Nitrosospira multiformis (strain ATCC 25196 / NCIMB 11849 / C 71)).